The sequence spans 244 residues: Probable transcriptional regulatory protein XfasM23_0940 (244 aa).

It belongs to the TACO1 family.

Its subcellular location is the cytoplasm. The chain is Probable transcriptional regulatory protein XfasM23_0940 from Xylella fastidiosa (strain M23).